A 209-amino-acid chain; its full sequence is Orotate phosphoribosyltransferase (209 aa).

5-phospho-alpha-D-ribose 1-diphosphate contacts are provided by residues R96, K100, H102, and 122-130 (EDLISTGGS). S126 contacts orotate.

This sequence belongs to the purine/pyrimidine phosphoribosyltransferase family. PyrE subfamily. Homodimer. Requires Mg(2+) as cofactor.

It catalyses the reaction orotidine 5'-phosphate + diphosphate = orotate + 5-phospho-alpha-D-ribose 1-diphosphate. It functions in the pathway pyrimidine metabolism; UMP biosynthesis via de novo pathway; UMP from orotate: step 1/2. In terms of biological role, catalyzes the transfer of a ribosyl phosphate group from 5-phosphoribose 1-diphosphate to orotate, leading to the formation of orotidine monophosphate (OMP). The polypeptide is Orotate phosphoribosyltransferase (Listeria monocytogenes serotype 4b (strain F2365)).